The following is a 148-amino-acid chain: MSDPIKLHDLRPAKGANKAKTRVGRGEASKGKTAGRGTKGTKARNKVPAYFEGGQMPLQMRLPKLKGFKNNNKVIFQVVNVSDLEKAFPNGGDVAVADLVAAGLVRAKQPVKVLGNGEISVKLNVTAQKFSGSAKEKIEKAGGSVTEA.

Over residues 1–12 the composition is skewed to basic and acidic residues; sequence MSDPIKLHDLRP. The segment at 1–45 is disordered; the sequence is MSDPIKLHDLRPAKGANKAKTRVGRGEASKGKTAGRGTKGTKARN.

Belongs to the universal ribosomal protein uL15 family. Part of the 50S ribosomal subunit.

In terms of biological role, binds to the 23S rRNA. This Corynebacterium urealyticum (strain ATCC 43042 / DSM 7109) protein is Large ribosomal subunit protein uL15.